We begin with the raw amino-acid sequence, 55 residues long: Small integral membrane protein 27 (55 aa).

The helical transmembrane segment at 11–31 (WIYSVLLLAIVLISWGCIIYA) threads the bilayer.

It localises to the membrane. The chain is Small integral membrane protein 27 from Homo sapiens (Human).